Here is a 450-residue protein sequence, read N- to C-terminus: Phosphoglucosamine mutase (450 aa).

The Phosphoserine intermediate role is filled by Ser101. 4 residues coordinate Mg(2+): Ser101, Asp240, Asp242, and Asp244. Residue Ser101 is modified to Phosphoserine.

Belongs to the phosphohexose mutase family. It depends on Mg(2+) as a cofactor. Post-translationally, activated by phosphorylation.

The catalysed reaction is alpha-D-glucosamine 1-phosphate = D-glucosamine 6-phosphate. Its function is as follows. Catalyzes the conversion of glucosamine-6-phosphate to glucosamine-1-phosphate. This chain is Phosphoglucosamine mutase, found in Streptococcus uberis (strain ATCC BAA-854 / 0140J).